The chain runs to 380 residues: Flap endonuclease 1 (380 aa).

Residues 1–104 are N-domain; the sequence is MGIQGLAKLI…GELAKRSERR (104 aa). R19 carries the symmetric dimethylarginine; by PRMT5 modification. D34 is a Mg(2+) binding site. Positions 47 and 70 each coordinate DNA. K80 is subject to N6-acetyllysine. Mg(2+) is bound at residue D86. R100 and R104 each carry symmetric dimethylarginine; by PRMT5. Positions 122-253 are I-domain; sequence EVEKFTKRLV…KRAVDLIQKH (132 aa). Mg(2+) contacts are provided by E158, E160, D179, and D181. E158 contributes to the DNA binding site. Position 187 is a phosphoserine; by CDK2 (S187). At R192 the chain carries Symmetric dimethylarginine; by PRMT5. S197 is subject to Phosphoserine. G231 and D233 together coordinate DNA. Position 233 (D233) interacts with Mg(2+). A phosphoserine mark is found at S255, S293, and S335. The interval 327–380 is disordered; the sequence is RLSKSRQGSTQGRLDDFFKVTGSLSSAKRKEPEPKGSTKKKAKTGAAGKFKRGK. A Phosphothreonine modification is found at T336. The interaction with PCNA stretch occupies residues 336-344; the sequence is TQGRLDDFF. K354 is modified (N6-acetyllysine). Positions 363–380 are enriched in basic residues; sequence STKKKAKTGAAGKFKRGK. Position 364 is a phosphothreonine (T364). Residues K375, K377, and K380 each carry the N6-acetyllysine modification.

The protein belongs to the XPG/RAD2 endonuclease family. FEN1 subfamily. Interacts with PCNA. Three molecules of FEN1 bind to one PCNA trimer with each molecule binding to one PCNA monomer. PCNA stimulates the nuclease activity without altering cleavage specificity. The C-terminal domain binds EP300; can bind simultaneously to both PCNA and EP300. Interacts with DDX11; this interaction is direct and increases flap endonuclease activity of FEN1. Interacts with WDR4; regulating its endonuclease activity. Interacts with POLB. Mg(2+) serves as cofactor. Post-translationally, acetylated by EP300. Acetylation inhibits both endonuclease and exonuclease activity. Acetylation also reduces DNA-binding activity but does not affect interaction with PCNA or EP300. Phosphorylation upon DNA damage induces relocalization to the nuclear plasma. Phosphorylation at Ser-187 by CDK2 occurs during late S-phase and results in dissociation from PCNA. In terms of processing, methylation at Arg-192 by PRMT5 impedes Ser-187 phosphorylation and increases interaction with PCNA.

It localises to the nucleus. It is found in the nucleolus. Its subcellular location is the nucleoplasm. The protein resides in the mitochondrion. Functionally, structure-specific nuclease with 5'-flap endonuclease and 5'-3' exonuclease activities involved in DNA replication and repair. During DNA replication, cleaves the 5'-overhanging flap structure that is generated by displacement synthesis when DNA polymerase encounters the 5'-end of a downstream Okazaki fragment. It enters the flap from the 5'-end and then tracks to cleave the flap base, leaving a nick for ligation. Also involved in the long patch base excision repair (LP-BER) pathway, by cleaving within the apurinic/apyrimidinic (AP) site-terminated flap. Acts as a genome stabilization factor that prevents flaps from equilibrating into structures that lead to duplications and deletions. Also possesses 5'-3' exonuclease activity on nicked or gapped double-stranded DNA, and exhibits RNase H activity. Also involved in replication and repair of rDNA and in repairing mitochondrial DNA. In Macaca fascicularis (Crab-eating macaque), this protein is Flap endonuclease 1.